Here is a 155-residue protein sequence, read N- to C-terminus: Small ribosomal subunit protein bS6 (155 aa).

Residues 94-155 (EEHETEPSAM…RDDNSDGGQE (62 aa)) are disordered. Residues 107–149 (RGDRGDRGDRRGGDRFGDRDRGDRGDRGSSRFGDRERPRRDDN) show a composition bias toward basic and acidic residues.

It belongs to the bacterial ribosomal protein bS6 family.

Functionally, binds together with bS18 to 16S ribosomal RNA. This chain is Small ribosomal subunit protein bS6, found in Parvibaculum lavamentivorans (strain DS-1 / DSM 13023 / NCIMB 13966).